The sequence spans 163 residues: Putative pre-16S rRNA nuclease (163 aa).

Belongs to the YqgF nuclease family.

The protein localises to the cytoplasm. Functionally, could be a nuclease involved in processing of the 5'-end of pre-16S rRNA. This Nitrobacter winogradskyi (strain ATCC 25391 / DSM 10237 / CIP 104748 / NCIMB 11846 / Nb-255) protein is Putative pre-16S rRNA nuclease.